The following is a 121-amino-acid chain: Small ribosomal subunit protein uS13 (121 aa).

The segment at 91–121 (HRRGLPVRGQKTKNNARTRKGPVKTVANKKK) is disordered.

Belongs to the universal ribosomal protein uS13 family. Part of the 30S ribosomal subunit. Forms a loose heterodimer with protein S19. Forms two bridges to the 50S subunit in the 70S ribosome.

Located at the top of the head of the 30S subunit, it contacts several helices of the 16S rRNA. In the 70S ribosome it contacts the 23S rRNA (bridge B1a) and protein L5 of the 50S subunit (bridge B1b), connecting the 2 subunits; these bridges are implicated in subunit movement. Contacts the tRNAs in the A and P-sites. The chain is Small ribosomal subunit protein uS13 from Staphylococcus carnosus (strain TM300).